The chain runs to 207 residues: Large ribosomal subunit protein uL18 (207 aa).

Belongs to the universal ribosomal protein uL18 family. In terms of assembly, part of the 50S ribosomal subunit. Contacts the 5S and 23S rRNAs.

This is one of the proteins that bind and probably mediate the attachment of the 5S RNA into the large ribosomal subunit, where it forms part of the central protuberance. The polypeptide is Large ribosomal subunit protein uL18 (Caldivirga maquilingensis (strain ATCC 700844 / DSM 13496 / JCM 10307 / IC-167)).